We begin with the raw amino-acid sequence, 151 residues long: Transcriptional regulator MraZ (151 aa).

2 consecutive SpoVT-AbrB domains span residues 7-53 (EYDC…SQTE) and 82-125 (INEV…SPDL).

Belongs to the MraZ family. As to quaternary structure, forms oligomers.

It is found in the cytoplasm. It localises to the nucleoid. In Cytophaga hutchinsonii (strain ATCC 33406 / DSM 1761 / CIP 103989 / NBRC 15051 / NCIMB 9469 / D465), this protein is Transcriptional regulator MraZ.